Here is a 462-residue protein sequence, read N- to C-terminus: UDP-N-acetylmuramoylalanine--D-glutamate ligase (462 aa).

Position 111–117 (G111–T117) interacts with ATP.

The protein belongs to the MurCDEF family.

The protein resides in the cytoplasm. The catalysed reaction is UDP-N-acetyl-alpha-D-muramoyl-L-alanine + D-glutamate + ATP = UDP-N-acetyl-alpha-D-muramoyl-L-alanyl-D-glutamate + ADP + phosphate + H(+). Its pathway is cell wall biogenesis; peptidoglycan biosynthesis. Its function is as follows. Cell wall formation. Catalyzes the addition of glutamate to the nucleotide precursor UDP-N-acetylmuramoyl-L-alanine (UMA). The chain is UDP-N-acetylmuramoylalanine--D-glutamate ligase from Trichodesmium erythraeum (strain IMS101).